The primary structure comprises 323 residues: RING-H2 finger protein ATL32 (323 aa).

The first 28 residues, 1–28 (MMTRVECFNPHRWIILHVAIIIQSKANA), serve as a signal peptide directing secretion. The helical transmembrane segment at 47–67 (TTVFAVLVTLFFLTGLLSVYI) threads the bilayer. An RING-type; atypical zinc finger spans residues 124–166 (CAICLNELEDHETVRLLPICNHLFHIDCIDTWLYSHATCPVCR). Positions 210–229 (SSEISGKFPRSNSTGHSMDR) are disordered.

This sequence belongs to the RING-type zinc finger family. ATL subfamily.

The protein localises to the membrane. The catalysed reaction is S-ubiquitinyl-[E2 ubiquitin-conjugating enzyme]-L-cysteine + [acceptor protein]-L-lysine = [E2 ubiquitin-conjugating enzyme]-L-cysteine + N(6)-ubiquitinyl-[acceptor protein]-L-lysine.. It functions in the pathway protein modification; protein ubiquitination. The sequence is that of RING-H2 finger protein ATL32 (ATL32) from Arabidopsis thaliana (Mouse-ear cress).